We begin with the raw amino-acid sequence, 772 residues long: Transducin-like enhancer protein 4 (772 aa).

Disordered stretches follow at residues 1–24 (MIRD…PAQP) and 183–359 (LPIK…LTGL). The tract at residues 1–137 (MIRDLSKMYP…AIIGQQLQAQ (137 aa)) is q domain. The interval 138 to 205 (HLSHAHGLPV…HQRDRDSIKS (68 aa)) is GP domain. Basic and acidic residues predominate over residues 184–203 (PIKDEKKHHDSDHQRDRDSI). A compositionally biased stretch (low complexity) spans 204-213 (KSSSVSPSAS). A ccN domain region spans residues 206-275 (SSVSPSASFR…SPRGSPAHSP (70 aa)). 2 stretches are compositionally biased toward basic and acidic residues: residues 216 to 253 (AAEK…KSDD) and 274 to 290 (SPRE…KKDA). The SP domain stretch occupies residues 276-452 (RENGLDKPRL…GGKPAYSFHV (177 aa)). Residues 291 to 306 (PISPASIASSSSTPSS) are compositionally biased toward low complexity. A compositionally biased stretch (basic and acidic residues) spans 307 to 316 (KSKEHSHNEK). Positions 318-329 (TTPVSKSNTPTP) are enriched in polar residues. 7 WD repeats span residues 484–522 (NHGE…NKSP), 530–569 (NRDN…PRIK), 574–613 (SSAP…LVRQ), 616–655 (GHTD…QLQQ), 657–696 (DFTS…KYQL), 698–737 (LHES…SIFQ), and 739–772 (KESS…EVIY).

The protein belongs to the WD repeat Groucho/TLE family. In terms of assembly, interacts with tcf7, tcf7l1, ripply2.2/bowline, dscr6/ripply3 and foxd3. Associates with tbx6 in the presence of ripply2.2/bowline. Interacts with EFNB1 through the SP domain. In terms of processing, ubiquitinated by XIAP/BIRC4. In terms of tissue distribution, expressed at high levels in the spleen and ovary.

The protein resides in the nucleus. Its function is as follows. Transcriptional corepressor. Functions with ripply2.2/bowline to down regulate transcription of tbx6-dependent gene expression. Represses transcription of siamois and nodal3. The chain is Transducin-like enhancer protein 4 (tle4) from Xenopus laevis (African clawed frog).